The chain runs to 255 residues: Proteasome subunit alpha type-3 (255 aa).

An N-acetylserine modification is found at S2. 3 positions are modified to N6-acetyllysine: K57, K206, and K230. A phosphoserine mark is found at S243 and S250.

The protein belongs to the peptidase T1A family. In terms of assembly, the 26S proteasome consists of a 20S proteasome core and two 19S regulatory subunits. The 20S proteasome core is a barrel-shaped complex made of 28 subunits that are arranged in four stacked rings. The two outer rings are each formed by seven alpha subunits, and the two inner rings are formed by seven beta subunits. The proteolytic activity is exerted by three beta-subunits PSMB5, PSMB6 and PSMB7. Interacts with AURKB. Interacts with CDKN1A. Interacts with MDM2 and RB1. Interacts with the C-terminus of TBXA2R isoform 2. Interacts with DNAJB2. (Microbial infection) Interacts with HIV-1 Tat protein. As to quaternary structure, (Microbial infection) Interacts with hepatitis C virus (HCV) F protein. In terms of assembly, (Microbial infection) Interacts with Epstein-Barr virus EBNA3 proteins.

The protein resides in the cytoplasm. It is found in the nucleus. Functionally, component of the 20S core proteasome complex involved in the proteolytic degradation of most intracellular proteins. This complex plays numerous essential roles within the cell by associating with different regulatory particles. Associated with two 19S regulatory particles, forms the 26S proteasome and thus participates in the ATP-dependent degradation of ubiquitinated proteins. The 26S proteasome plays a key role in the maintenance of protein homeostasis by removing misfolded or damaged proteins that could impair cellular functions, and by removing proteins whose functions are no longer required. Associated with the PA200 or PA28, the 20S proteasome mediates ubiquitin-independent protein degradation. This type of proteolysis is required in several pathways including spermatogenesis (20S-PA200 complex) or generation of a subset of MHC class I-presented antigenic peptides (20S-PA28 complex). Binds to the C-terminus of CDKN1A and thereby mediates its degradation. Negatively regulates the membrane trafficking of the cell-surface thromboxane A2 receptor (TBXA2R) isoform 2. The chain is Proteasome subunit alpha type-3 from Homo sapiens (Human).